Consider the following 224-residue polypeptide: Glutathione S-transferase U4 (224 aa).

The GST N-terminal domain maps to 6–85; it reads EDVKLLGFWA…YIDQIWKNNP (80 aa). Glutathione is bound by residues 16–17, 42–43, 56–57, and 69–70; these read SP, NK, KV, and ES. Positions 90–217 constitute a GST C-terminal domain; sequence DPYEKAMALF…EEQIEHMKKV (128 aa). The residue at position 151 (threonine 151) is a Phosphothreonine.

The protein belongs to the GST superfamily. Tau family.

It localises to the cytoplasm. The protein localises to the cytosol. It carries out the reaction RX + glutathione = an S-substituted glutathione + a halide anion + H(+). Its function is as follows. May be involved in the conjugation of reduced glutathione to a wide number of exogenous and endogenous hydrophobic electrophiles and have a detoxification role against certain herbicides. The sequence is that of Glutathione S-transferase U4 (GSTU4) from Arabidopsis thaliana (Mouse-ear cress).